Here is a 962-residue protein sequence, read N- to C-terminus: Glycine dehydrogenase (decarboxylating) (962 aa).

K709 is modified (N6-(pyridoxal phosphate)lysine).

It belongs to the GcvP family. The glycine cleavage system is composed of four proteins: P, T, L and H. Requires pyridoxal 5'-phosphate as cofactor.

It catalyses the reaction N(6)-[(R)-lipoyl]-L-lysyl-[glycine-cleavage complex H protein] + glycine + H(+) = N(6)-[(R)-S(8)-aminomethyldihydrolipoyl]-L-lysyl-[glycine-cleavage complex H protein] + CO2. Its function is as follows. The glycine cleavage system catalyzes the degradation of glycine. The P protein binds the alpha-amino group of glycine through its pyridoxal phosphate cofactor; CO(2) is released and the remaining methylamine moiety is then transferred to the lipoamide cofactor of the H protein. The polypeptide is Glycine dehydrogenase (decarboxylating) (Shewanella sediminis (strain HAW-EB3)).